The sequence spans 581 residues: Proline--tRNA ligase (581 aa).

Belongs to the class-II aminoacyl-tRNA synthetase family. ProS type 1 subfamily. Homodimer.

It localises to the cytoplasm. The catalysed reaction is tRNA(Pro) + L-proline + ATP = L-prolyl-tRNA(Pro) + AMP + diphosphate. Its function is as follows. Catalyzes the attachment of proline to tRNA(Pro) in a two-step reaction: proline is first activated by ATP to form Pro-AMP and then transferred to the acceptor end of tRNA(Pro). As ProRS can inadvertently accommodate and process non-cognate amino acids such as alanine and cysteine, to avoid such errors it has two additional distinct editing activities against alanine. One activity is designated as 'pretransfer' editing and involves the tRNA(Pro)-independent hydrolysis of activated Ala-AMP. The other activity is designated 'posttransfer' editing and involves deacylation of mischarged Ala-tRNA(Pro). The misacylated Cys-tRNA(Pro) is not edited by ProRS. In Acidovorax ebreus (strain TPSY) (Diaphorobacter sp. (strain TPSY)), this protein is Proline--tRNA ligase.